Consider the following 60-residue polypeptide: Cytotoxin KJC3 (60 aa).

Disulfide bonds link cysteine 3-cysteine 21, cysteine 14-cysteine 38, cysteine 42-cysteine 53, and cysteine 54-cysteine 59.

It belongs to the three-finger toxin family. Short-chain subfamily. Type IA cytotoxin sub-subfamily. In terms of assembly, monomer in solution; Homodimer and oligomer in the presence of negatively charged lipids forming a pore with a size ranging between 20 and 30 Angstroms. In terms of tissue distribution, expressed by the venom gland.

It localises to the secreted. Its subcellular location is the target cell membrane. In terms of biological role, shows cytolytic activity on many different cells by forming pore in lipid membranes. In vivo, increases heart rate or kills the animal by cardiac arrest. In addition, it binds to heparin with high affinity, interacts with Kv channel-interacting protein 1 (KCNIP1) in a calcium-independent manner, and binds to integrin alpha-V/beta-3 (ITGAV/ITGB3) with moderate affinity. The chain is Cytotoxin KJC3 from Naja sputatrix (Malayan spitting cobra).